A 227-amino-acid polypeptide reads, in one-letter code: Cytochrome c oxidase subunit 2 (227 aa).

Over 1–26 (MSTWKNLFLQDSASPLMELLMCFHDH) the chain is Mitochondrial intermembrane. Residues 27–48 (AMLILILITIMVSQMLLSMLFN) form a helical membrane-spanning segment. Topologically, residues 49-62 (KLSHRYLLEGQLIE) are mitochondrial matrix. A helical transmembrane segment spans residues 63 to 82 (TIWTIIPAIILILIALPSLR). Residues 83–227 (LLYILDEINN…LFLNWVISKA (145 aa)) lie on the Mitochondrial intermembrane side of the membrane. Histidine 161, cysteine 196, glutamate 198, cysteine 200, histidine 204, and methionine 207 together coordinate Cu cation. Residue glutamate 198 coordinates Mg(2+).

Belongs to the cytochrome c oxidase subunit 2 family. In terms of assembly, component of the cytochrome c oxidase (complex IV, CIV), a multisubunit enzyme composed of a catalytic core of 3 subunits and several supernumerary subunits. The complex exists as a monomer or a dimer and forms supercomplexes (SCs) in the inner mitochondrial membrane with ubiquinol-cytochrome c oxidoreductase (cytochrome b-c1 complex, complex III, CIII). Cu cation is required as a cofactor.

Its subcellular location is the mitochondrion inner membrane. It catalyses the reaction 4 Fe(II)-[cytochrome c] + O2 + 8 H(+)(in) = 4 Fe(III)-[cytochrome c] + 2 H2O + 4 H(+)(out). In terms of biological role, component of the cytochrome c oxidase, the last enzyme in the mitochondrial electron transport chain which drives oxidative phosphorylation. The respiratory chain contains 3 multisubunit complexes succinate dehydrogenase (complex II, CII), ubiquinol-cytochrome c oxidoreductase (cytochrome b-c1 complex, complex III, CIII) and cytochrome c oxidase (complex IV, CIV), that cooperate to transfer electrons derived from NADH and succinate to molecular oxygen, creating an electrochemical gradient over the inner membrane that drives transmembrane transport and the ATP synthase. Cytochrome c oxidase is the component of the respiratory chain that catalyzes the reduction of oxygen to water. Electrons originating from reduced cytochrome c in the intermembrane space (IMS) are transferred via the dinuclear copper A center (CU(A)) of subunit 2 and heme A of subunit 1 to the active site in subunit 1, a binuclear center (BNC) formed by heme A3 and copper B (CU(B)). The BNC reduces molecular oxygen to 2 water molecules using 4 electrons from cytochrome c in the IMS and 4 protons from the mitochondrial matrix. The chain is Cytochrome c oxidase subunit 2 (COII) from Sitophilus granarius (Granary weevil).